The chain runs to 120 residues: Small ribosomal subunit protein eS17 (120 aa).

Belongs to the eukaryotic ribosomal protein eS17 family. As to quaternary structure, component of the small ribosomal subunit.

It localises to the cytoplasm. The chain is Small ribosomal subunit protein eS17 (RPS17) from Encephalitozoon cuniculi (strain GB-M1) (Microsporidian parasite).